Here is a 1235-residue protein sequence, read N- to C-terminus: Serine/threonine-protein kinase TAO2 (1235 aa).

At S9 the chain carries Phosphoserine. One can recognise a Protein kinase domain in the interval 28-281 (FSDLREIGHG…SEVLLKHRFV (254 aa)). ATP is bound by residues 34 to 42 (IGHGSFGAV) and K57. Residue 106–108 (EYC) participates in staurosporine binding. The active-site Proton acceptor is the D151. G155 provides a ligand contact to staurosporine. Residue S181 is modified to Phosphoserine. A disordered region spans residues 318–457 (QEAPNGPGAE…PTSTSSSSAR (140 aa)). A compositionally biased stretch (low complexity) spans 350–374 (SSHSVPSMSISASSQSSSVNSLADA). The span at 375–395 (SDNEEEEEEEEEEEEEEEEEG) shows a compositional bias: acidic residues. Residues 396–411 (PESREMAMMQEGEHTV) are compositionally biased toward basic and acidic residues. S416 bears the Phosphoserine mark. 2 coiled-coil regions span residues 488–523 (SALR…EEHS) and 576–603 (KELA…LQEN). A Phosphoserine modification is found at S658. Residues 683 to 715 (LRQHEATRELELRQLQAVQRTRAELTRLQHQTE) are a coiled coil. Phosphoserine occurs at positions 777, 825, and 827. Residues 892–941 (GPVLTPVPEEEEEEEEEGGAPIGTPRDPGDGCPSPDIPPEPPPSHLRQYP) form a disordered region. Over residues 899-909 (PEEEEEEEEEG) the composition is skewed to acidic residues. A compositionally biased stretch (pro residues) spans 926-935 (PDIPPEPPPS). 3 helical membrane-spanning segments follow: residues 967–987 (LLPL…GGGL), 989–1009 (AALL…LFLC), and 1014–1034 (LPPS…VLSL). At R1038 the chain carries Phosphoserine. 2 helical membrane passes run 1040 to 1060 (LMGV…SLAL) and 1170 to 1190 (LASC…LLKG). The segment at 1210–1235 (SASRQLPPGTVAGRRSQTRRALPPWR) is disordered.

Belongs to the protein kinase superfamily. STE Ser/Thr protein kinase family. STE20 subfamily. Self-associates. Interacts with MAP2K3 and MAP2K6. Interacts with tubulins. Interacts with MAP3K7 and interferes with MAP3K7-binding to CHUK and thus prevents NF-kappa-B activation. Isoform 2 interacts with PCDH8; this complex may also include CDH2. Requires Mg(2+) as cofactor. Autophosphorylated. Phosphorylated by ATM. Post-translationally, phosphorylated on Ser-1038 by MAPK14. This phosphorylation is required PCDH8 for endocytosis.

The protein localises to the cytoplasmic vesicle membrane. It localises to the cytoplasm. The protein resides in the cytoskeleton. It is found in the cell projection. Its subcellular location is the dendrite. The catalysed reaction is L-seryl-[protein] + ATP = O-phospho-L-seryl-[protein] + ADP + H(+). The enzyme catalyses L-threonyl-[protein] + ATP = O-phospho-L-threonyl-[protein] + ADP + H(+). Moderately inhibited by staurosporine, a broad-range protein kinase inhibitor. Functionally, serine/threonine-protein kinase involved in different processes such as membrane blebbing and apoptotic bodies formation DNA damage response and MAPK14/p38 MAPK stress-activated MAPK cascade. Phosphorylates itself, MBP, activated MAPK8, MAP2K3, MAP2K6 and tubulins. Activates the MAPK14/p38 MAPK signaling pathway through the specific activation and phosphorylation of the upstream MAP2K3 and MAP2K6 kinases. In response to DNA damage, involved in the G2/M transition DNA damage checkpoint by activating the p38/MAPK14 stress-activated MAPK cascade, probably by mediating phosphorylation of upstream MAP2K3 and MAP2K6 kinases. May affect microtubule organization and stability. May play a role in the osmotic stress-MAPK8 pathway. Prevents MAP3K7-mediated activation of CHUK, and thus NF-kappa-B activation. Isoform 2, but not isoform 1, is required for PCDH8 endocytosis. Following homophilic interactions between PCDH8 extracellular domains, isoform 2 phosphorylates and activates MAPK14/p38 MAPK which in turn phosphorylates isoform 2. This process leads to PCDH8 endocytosis and CDH2 cointernalization. Both isoforms are involved in MAPK14/p38 MAPK activation. The protein is Serine/threonine-protein kinase TAO2 (Taok2) of Rattus norvegicus (Rat).